Consider the following 290-residue polypeptide: Arylamine N-acetyltransferase 1 (290 aa).

Position 1 is an N-acetylmethionine (Met-1). Cys-68 serves as the catalytic Acyl-thioester intermediate. A CoA-binding site is contributed by Ser-103. Residue 106 to 107 (IH) coordinates substrate. Residues His-107 and Asp-122 contribute to the active site. 2 residues coordinate CoA: Tyr-208 and Ser-287.

Belongs to the arylamine N-acetyltransferase family.

The protein localises to the cytoplasm. The catalysed reaction is an arylamine + acetyl-CoA = an N-acetylarylamine + CoA. Participates in the detoxification of a plethora of hydrazine and arylamine drugs. The sequence is that of Arylamine N-acetyltransferase 1 (NAT1) from Mesocricetus auratus (Golden hamster).